Here is a 561-residue protein sequence, read N- to C-terminus: uncharacterized protein (561 aa).

The span at 314-323 (ANNGSGDSSS) shows a compositional bias: low complexity. Residues 314 to 366 (ANNGSGDSSSTALNNESPNTTPKSRTFFSPKGHRRNSSHVSSLTSRSTKKPIT) form a disordered region. The span at 324-340 (TALNNESPNTTPKSRTF) shows a compositional bias: polar residues. A Phosphoserine modification is found at S514.

The protein resides in the cytoplasm. This is an uncharacterized protein from Saccharomyces cerevisiae (strain ATCC 204508 / S288c) (Baker's yeast).